A 207-amino-acid polypeptide reads, in one-letter code: N-(5'-phosphoribosyl)anthranilate isomerase (207 aa).

It belongs to the TrpF family.

The catalysed reaction is N-(5-phospho-beta-D-ribosyl)anthranilate = 1-(2-carboxyphenylamino)-1-deoxy-D-ribulose 5-phosphate. Its pathway is amino-acid biosynthesis; L-tryptophan biosynthesis; L-tryptophan from chorismate: step 3/5. This chain is N-(5'-phosphoribosyl)anthranilate isomerase, found in Staphylococcus epidermidis (strain ATCC 35984 / DSM 28319 / BCRC 17069 / CCUG 31568 / BM 3577 / RP62A).